The following is an 83-amino-acid chain: Small ribosomal subunit protein bS16 (83 aa).

The protein belongs to the bacterial ribosomal protein bS16 family.

The sequence is that of Small ribosomal subunit protein bS16 from Acidovorax ebreus (strain TPSY) (Diaphorobacter sp. (strain TPSY)).